Reading from the N-terminus, the 269-residue chain is Ribonuclease HII (269 aa).

An RNase H type-2 domain is found at 83-269 (YLIAGVDEVG…HRMSFLTNIL (187 aa)). A divalent metal cation is bound by residues aspartate 89, glutamate 90, and aspartate 185.

This sequence belongs to the RNase HII family. It depends on Mn(2+) as a cofactor. Mg(2+) is required as a cofactor.

Its subcellular location is the cytoplasm. It catalyses the reaction Endonucleolytic cleavage to 5'-phosphomonoester.. Functionally, endonuclease that specifically degrades the RNA of RNA-DNA hybrids. The chain is Ribonuclease HII from Clostridium botulinum (strain Hall / ATCC 3502 / NCTC 13319 / Type A).